Consider the following 231-residue polypeptide: Large ribosomal subunit protein uL1 (231 aa).

The protein belongs to the universal ribosomal protein uL1 family. As to quaternary structure, part of the 50S ribosomal subunit.

Its function is as follows. Binds directly to 23S rRNA. The L1 stalk is quite mobile in the ribosome, and is involved in E site tRNA release. Functionally, protein L1 is also a translational repressor protein, it controls the translation of the L11 operon by binding to its mRNA. The chain is Large ribosomal subunit protein uL1 from Gluconacetobacter diazotrophicus (strain ATCC 49037 / DSM 5601 / CCUG 37298 / CIP 103539 / LMG 7603 / PAl5).